The sequence spans 144 residues: Probable 4-amino-4-deoxy-L-arabinose-phosphoundecaprenol flippase subunit ArnF (144 aa).

Over 1-6 (MTHRRA) the chain is Cytoplasmic. The chain crosses the membrane as a helical span at residues 7–24 (TLCAMASVALVSAAQLGM). Residues 25 to 56 (RWSMSRLPSPVQWLEMQEHAQLDLSALRVVCA) lie on the Periplasmic side of the membrane. Residues 57 to 77 (SITAYALSMLFWLLALRVLPL) form a helical membrane-spanning segment. Over 78–80 (SRA) the chain is Cytoplasmic. A helical transmembrane segment spans residues 81 to 101 (YSLLSISYALVYTLAATLPFF). Residues 102-104 (HET) lie on the Periplasmic side of the membrane. The chain crosses the membrane as a helical span at residues 105–125 (FTVSKTVGVSLIVAGVLTINL). The Cytoplasmic segment spans residues 126 to 144 (RRLPRPSPQDLSHENQRFR).

Belongs to the ArnF family. As to quaternary structure, heterodimer of ArnE and ArnF.

It localises to the cell inner membrane. It functions in the pathway bacterial outer membrane biogenesis; lipopolysaccharide biosynthesis. Functionally, translocates 4-amino-4-deoxy-L-arabinose-phosphoundecaprenol (alpha-L-Ara4N-phosphoundecaprenol) from the cytoplasmic to the periplasmic side of the inner membrane. This Pseudomonas syringae pv. syringae (strain B728a) protein is Probable 4-amino-4-deoxy-L-arabinose-phosphoundecaprenol flippase subunit ArnF.